The sequence spans 492 residues: MAAGERSWCLCKLLRFFYSLFFPGLIVCGTLCVCLVIVLWGIRLLLQRKKKLVSTSKNGKNQMVIAFFHPYCNAGGGGERVLWCALRALQKKYPEAVYVVYTGDVNVNGQQILEGAFRRFNIRLIHPVQFVFLRKRYLVEDSLYPHFTLLGQSLGSIFLGWEALMQCVPDVYIDSMGYAFTLPLFKYIGGCQVGSYVHYPTISTDMLSVVKNQNIGFNNAAFITRNPFLSKVKLIYYYLFAFIYGLVGSCSDVVMVNSSWTLNHILSLWKVGNCTNIVYPPCDVQTFLDIPLHEKKMTPGHLLVSVGQFRPEKNHPLQIRAFAKLLNKKMVESPPSLKLVLIGGCRNKDDELRVNQLRRLSEDLGVQEYVEFKINIPFDELKNYLSEATIGLHTMWNEHFGIGVVECMAAGTIILAHNSGGPKLDIVVPHEGDITGFLAESEEDYAETIAHILSMSAEKRLQIRKSARASVSRFSDQEFEVTFLSSVEKLFK.

The Lumenal segment spans residues 1–19; sequence MAAGERSWCLCKLLRFFYS. A helical membrane pass occupies residues 20–40; it reads LFFPGLIVCGTLCVCLVIVLW. At 41 to 233 the chain is on the cytoplasmic side; the sequence is GIRLLLQRKK…TRNPFLSKVK (193 aa). The segment at residues 234 to 254 is an intramembrane region (helical); sequence LIYYYLFAFIYGLVGSCSDVV. Residues 255–399 lie on the Cytoplasmic side of the membrane; that stretch reads MVNSSWTLNH…IGLHTMWNEH (145 aa). The helical intramembrane region spans 400-420; sequence FGIGVVECMAAGTIILAHNSG. Residues 421–492 lie on the Cytoplasmic side of the membrane; sequence GPKLDIVVPH…FLSSVEKLFK (72 aa).

It belongs to the glycosyltransferase group 1 family. Glycosyltransferase 4 subfamily.

The protein resides in the endoplasmic reticulum membrane. The catalysed reaction is an alpha-D-Man-(1-&gt;3)-[alpha-D-Man-(1-&gt;6)]-beta-D-Man-(1-&gt;4)-beta-D-GlcNAc-(1-&gt;4)-alpha-D-GlcNAc-diphospho-di-trans,poly-cis-dolichol + 2 GDP-alpha-D-mannose = an alpha-D-Man-(1-&gt;2)-alpha-D-Man-(1-&gt;2)-alpha-D-Man-(1-&gt;3)-[alpha-D-Man-(1-&gt;6)]-beta-D-Man-(1-&gt;4)-beta-D-GlcNAc-(1-&gt;4)-alpha-D-GlcNAc-diphospho-di-trans,poly-cis-dolichol + 2 GDP + 2 H(+). Its pathway is protein modification; protein glycosylation. In terms of biological role, GDP-Man:Man(3)GlcNAc(2)-PP-Dol alpha-1,2-mannosyltransferase that operates in the biosynthetic pathway of dolichol-linked oligosaccharides, the glycan precursors employed in protein asparagine (N)-glycosylation. The assembly of dolichol-linked oligosaccharides begins on the cytosolic side of the endoplasmic reticulum membrane and finishes in its lumen. The sequential addition of sugars to dolichol pyrophosphate produces dolichol-linked oligosaccharides containing fourteen sugars, including two GlcNAcs, nine mannoses and three glucoses. Once assembled, the oligosaccharide is transferred from the lipid to nascent proteins by oligosaccharyltransferases. Catalyzes, on the cytoplasmic face of the endoplasmic reticulum, the addition of the fourth and fifth mannose residues to the dolichol-linked oligosaccharide chain, to produce Man(5)GlcNAc(2)-PP-dolichol core oligosaccharide. Man(5)GlcNAc(2)-PP-dolichol is a substrate for ALG3, the following enzyme in the biosynthetic pathway. In Homo sapiens (Human), this protein is GDP-Man:Man(3)GlcNAc(2)-PP-Dol alpha-1,2-mannosyltransferase.